Consider the following 246-residue polypeptide: tRNA (guanine-N(1)-)-methyltransferase (246 aa).

Residues Gly114 and 134–139 each bind S-adenosyl-L-methionine; that span reads IGDYIL.

The protein belongs to the RNA methyltransferase TrmD family. Homodimer.

Its subcellular location is the cytoplasm. It carries out the reaction guanosine(37) in tRNA + S-adenosyl-L-methionine = N(1)-methylguanosine(37) in tRNA + S-adenosyl-L-homocysteine + H(+). Specifically methylates guanosine-37 in various tRNAs. In Coxiella burnetii (strain RSA 493 / Nine Mile phase I), this protein is tRNA (guanine-N(1)-)-methyltransferase.